Here is a 119-residue protein sequence, read N- to C-terminus: Large ribosomal subunit protein bL20 (119 aa).

The protein belongs to the bacterial ribosomal protein bL20 family.

In terms of biological role, binds directly to 23S ribosomal RNA and is necessary for the in vitro assembly process of the 50S ribosomal subunit. It is not involved in the protein synthesizing functions of that subunit. The sequence is that of Large ribosomal subunit protein bL20 from Granulibacter bethesdensis (strain ATCC BAA-1260 / CGDNIH1).